A 409-amino-acid chain; its full sequence is MEESWEAAPGGQAGAELPMEPVGSLVPTLEQPQVPAKVRQPEGPESSPSPAGAVEKAAGAGLEPSSKKKPPSPRPGSPRVPPLSLGYGVCPEPPSPGPALVKLPRNGEAPGAEPAPSAWAPMELQVDVRVKPVGAAGGSSTPSPRPSTRFLKVPVPESPAFSRHADPAHQLLLRAPSQGGTWGRRSPLAAARTESGCDAEGRASPAEGSAGSPGSPTCCRCKELGLEKEDAALLPRAGLDGDEKLPRAVTLTGLPMYVKSLYWALAFMAVLLAVSGVVIVVLASRAGARCQQCPPGWVLSEEHCYYFSAEAQAWEASQAFCSAYHATLPLLSHTQDFLGRYPVSRHSWVGAWRGPQGWHWIDEAPLPPQLLPEDGEDNLDINCGALEEGTLVAANCSTPRPWVCAKGTQ.

Residues 1-120 form a disordered region; that stretch reads MEESWEAAPG…GAEPAPSAWA (120 aa). Residues 41-53 show a composition bias toward low complexity; the sequence is PEGPESSPSPAGA. The span at 72–81 shows a compositional bias: pro residues; the sequence is SPRPGSPRVP. The segment covering 104-120 has biased composition (low complexity); the sequence is PRNGEAPGAEPAPSAWA. Ser158 is subject to Phosphoserine. The segment at 193–216 is disordered; sequence TESGCDAEGRASPAEGSAGSPGSP. The segment covering 202–216 has biased composition (low complexity); the sequence is RASPAEGSAGSPGSP. The helical transmembrane segment at 263–283 threads the bilayer; that stretch reads WALAFMAVLLAVSGVVIVVLA. The region spanning 300-405 is the C-type lectin domain; sequence SEEHCYYFSA…CSTPRPWVCA (106 aa). Intrachain disulfides connect Cys321/Cys404 and Cys383/Cys396.

The protein localises to the membrane. The protein is Killer cell lectin-like receptor subfamily G member 2 (KLRG2) of Homo sapiens (Human).